Reading from the N-terminus, the 215-residue chain is MRIILLGAPGAGKGTQAQFLMNTFGIPQISTGDMLRSAIKSGSELGKKAKQVMDAGQLVSDDIIIELVKERIAEPDCQNGFLLDGFPRTIPQADAMRDNGIEIDYVLEFDVPDEIIVDRMSGRRVHPGSGRVYHVEHNPPKVEGKDDETGEDLVVRPDDQEQTVRKRLSVYHEQTEPLVEYYQKLSEEGKTEYHKIDGTQPVERVSEQLGDLLRK.

10–15 (GAGKGT) provides a ligand contact to ATP. The tract at residues 30 to 59 (STGDMLRSAIKSGSELGKKAKQVMDAGQLV) is NMP. Residues threonine 31, arginine 36, 57 to 59 (QLV), 85 to 88 (GFPR), and glutamine 92 contribute to the AMP site. An LID region spans residues 122–159 (GRRVHPGSGRVYHVEHNPPKVEGKDDETGEDLVVRPDD). ATP is bound by residues arginine 123 and 132 to 133 (VY). The interval 128-151 (GSGRVYHVEHNPPKVEGKDDETGE) is disordered. Residues 133–144 (YHVEHNPPKVEG) are compositionally biased toward basic and acidic residues. Arginine 156 and arginine 167 together coordinate AMP. Residues 195–215 (KIDGTQPVERVSEQLGDLLRK) form a disordered region. Glutamine 200 is a binding site for ATP.

This sequence belongs to the adenylate kinase family. Monomer.

It is found in the cytoplasm. It catalyses the reaction AMP + ATP = 2 ADP. It functions in the pathway purine metabolism; AMP biosynthesis via salvage pathway; AMP from ADP: step 1/1. Functionally, catalyzes the reversible transfer of the terminal phosphate group between ATP and AMP. Plays an important role in cellular energy homeostasis and in adenine nucleotide metabolism. The protein is Adenylate kinase of Idiomarina loihiensis (strain ATCC BAA-735 / DSM 15497 / L2-TR).